The chain runs to 376 residues: DNA replication and repair protein RecF (376 aa).

Residue 30-37 (GNNAQGKS) coordinates ATP.

It belongs to the RecF family.

It is found in the cytoplasm. Functionally, the RecF protein is involved in DNA metabolism; it is required for DNA replication and normal SOS inducibility. RecF binds preferentially to single-stranded, linear DNA. It also seems to bind ATP. The chain is DNA replication and repair protein RecF from Nostoc sp. (strain PCC 7120 / SAG 25.82 / UTEX 2576).